The following is a 189-amino-acid chain: Lipid A acyltransferase PagP (189 aa).

The signal sequence occupies residues methionine 1–alanine 24. Active-site residues include histidine 61, aspartate 104, and serine 105.

The protein belongs to the lipid A palmitoyltransferase family. Homodimer.

The protein resides in the cell outer membrane. The enzyme catalyses a lipid A + a 1,2-diacyl-sn-glycero-3-phosphocholine = a hepta-acyl lipid A + a 2-acyl-sn-glycero-3-phosphocholine. It catalyses the reaction a lipid IVA + a 1,2-diacyl-sn-glycero-3-phosphocholine = a lipid IVB + a 2-acyl-sn-glycero-3-phosphocholine. The catalysed reaction is a lipid IIA + a 1,2-diacyl-sn-glycero-3-phosphocholine = a lipid IIB + a 2-acyl-sn-glycero-3-phosphocholine. Transfers a fatty acid residue from the sn-1 position of a phospholipid to the N-linked hydroxyfatty acid chain on the proximal unit of lipid A or its precursors. In Klebsiella pneumoniae subsp. pneumoniae (strain ATCC 700721 / MGH 78578), this protein is Lipid A acyltransferase PagP.